Consider the following 331-residue polypeptide: Peroxidase 49 (331 aa).

The signal sequence occupies residues 1-22 (MARLTSFLLLLSLICFVPLCLC). 4 disulfides stabilise this stretch: Cys39/Cys119, Cys72/Cys77, Cys125/Cys326, and Cys204/Cys236. His70 functions as the Proton acceptor in the catalytic mechanism. The Ca(2+) site is built by Asp71, Val74, Gly76, Asp78, and Ser80. Pro167 is a substrate binding site. N-linked (GlcNAc...) asparagine glycosylation is present at Asn170. A heme b-binding site is contributed by His197. Residue Thr198 participates in Ca(2+) binding. Asn213 carries an N-linked (GlcNAc...) asparagine glycan. Ca(2+)-binding residues include Asp249, Ser252, and Asp257.

This sequence belongs to the peroxidase family. Classical plant (class III) peroxidase subfamily. Requires heme b as cofactor. It depends on Ca(2+) as a cofactor.

It localises to the secreted. The enzyme catalyses 2 a phenolic donor + H2O2 = 2 a phenolic radical donor + 2 H2O. Functionally, removal of H(2)O(2), oxidation of toxic reductants, biosynthesis and degradation of lignin, suberization, auxin catabolism, response to environmental stresses such as wounding, pathogen attack and oxidative stress. These functions might be dependent on each isozyme/isoform in each plant tissue. This is Peroxidase 49 (PER49) from Arabidopsis thaliana (Mouse-ear cress).